The chain runs to 546 residues: Putative serine/threonine-protein kinase L268 (546 aa).

One can recognise a Cyclin N-terminal domain in the interval 1-112; sequence MVCFSKYSGI…ILQTLDFHLV (112 aa). The region spanning 260-544 is the Protein kinase domain; the sequence is ITVVKNLGEG…QTLEEFNKFN (285 aa). Residues 266-274 and lysine 287 contribute to the ATP site; that span reads LGEGTYGTV. Aspartate 389 functions as the Proton acceptor in the catalytic mechanism.

Belongs to the protein kinase superfamily. Ser/Thr protein kinase family.

The catalysed reaction is L-seryl-[protein] + ATP = O-phospho-L-seryl-[protein] + ADP + H(+). The enzyme catalyses L-threonyl-[protein] + ATP = O-phospho-L-threonyl-[protein] + ADP + H(+). This Acanthamoeba polyphaga mimivirus (APMV) protein is Putative serine/threonine-protein kinase L268.